The following is a 1478-amino-acid chain: FYVE and coiled-coil domain-containing protein 1 (1478 aa).

Residue A2 is modified to N-acetylalanine. Residues 4-33 (TNAESQLQRIIRDLQDAVTELSKEFQEAGE) are a coiled coil. One can recognise an RUN domain in the interval 36 to 169 (TDDSTSLHKF…VQFDLASRGF (134 aa)). S196 bears the Phosphoserine mark. The stretch at 225-280 (NNEALEGFDEMRLELDQLEVREKQLRERMQQLDRENQELRAAVSQQGEQLQTERER) forms a coiled coil. Residue S342 is modified to Phosphoserine. T381 is modified (phosphothreonine). 2 coiled-coil regions span residues 394 to 555 (SDAA…MLER) and 596 to 1151 (QEAQ…KDAL). A disordered region spans residues 586–613 (GKPEEEQRGLQEAQLDDTKVQEGSQEEE). Residue S878 is modified to Phosphoserine. An FYVE-type zinc finger spans residues 1173 to 1231 (DTEANHCLDCKREFSWMVRRHHCRICGRIFCYYCCNNYVLSKHGGKKERCCRACFQKLS). Positions 1179, 1182, 1195, 1198, 1203, 1206, 1223, and 1226 each coordinate Zn(2+). A compositionally biased stretch (low complexity) spans 1231-1261 (SEGPGSPDSSGSGTSQGEPSPALSPASPGPQ). Disordered regions lie at residues 1231–1277 (SEGP…PPDD) and 1294–1332 (SGSS…DMPV). Polar residues-rich tracts occupy residues 1294–1305 (SGSSLPETPTET) and 1314–1324 (EQDTTSTSLTP). A GOLD domain is found at 1337–1466 (EICLLKSGEL…SKKVFYHLTV (130 aa)).

In terms of assembly, can form homodimers. Interacts (via C-terminus) with MAP1LC3B. Interacts with RAB7A; the interaction with RAB7A induces FYCO1 recruitment to late endosomal/lysosomal compartments. Interacts with MAP1LC3B. As to expression, expressed in heart and skeletal muscle.

The protein resides in the cytoplasmic vesicle. It localises to the autophagosome. The protein localises to the endosome. Its subcellular location is the lysosome. May mediate microtubule plus end-directed vesicle transport. The polypeptide is FYVE and coiled-coil domain-containing protein 1 (FYCO1) (Homo sapiens (Human)).